The chain runs to 87 residues: HssA/B-like protein 57 (87 aa).

It belongs to the hssA/B family.

This is HssA/B-like protein 57 (hssl57) from Dictyostelium discoideum (Social amoeba).